Reading from the N-terminus, the 284-residue chain is Capsid assembly scaffolding protein (284 aa).

Active-site residues include D19, H48, and S107. The stretch at 206-243 (EAVTAVAEHVQEKLSATEQRLAEMETAFSALKQEVTDR) forms a coiled coil. The interval 258-284 (LDHTESLTQQRRSKATGGGGDALMTNC) is disordered.

The protein belongs to the P2likevirus scaffolding protein family. As to quaternary structure, homomultimer. Autocleaves itself into an N-terminal fragment containing the protease activity, that remains in the capsid following maturation.

In terms of biological role, scaffolding protein and protease involved in the icosahedric procapsid assembly. Coassembles with the capsid proteins to form the procapsid, in which the scaffolding protein is found within the external shell of icosahedrally arranged capsid protein subunits. In a subsequent step the scaffolding protein molecules are cleaved by the viral protease activity. This chain is Capsid assembly scaffolding protein (O), found in Enterobacteriaceae (Bacteriophage P2).